The following is a 206-amino-acid chain: ATP phosphoribosyltransferase (206 aa).

Belongs to the ATP phosphoribosyltransferase family. Short subfamily. As to quaternary structure, heteromultimer composed of HisG and HisZ subunits.

It is found in the cytoplasm. It carries out the reaction 1-(5-phospho-beta-D-ribosyl)-ATP + diphosphate = 5-phospho-alpha-D-ribose 1-diphosphate + ATP. It functions in the pathway amino-acid biosynthesis; L-histidine biosynthesis; L-histidine from 5-phospho-alpha-D-ribose 1-diphosphate: step 1/9. Catalyzes the condensation of ATP and 5-phosphoribose 1-diphosphate to form N'-(5'-phosphoribosyl)-ATP (PR-ATP). Has a crucial role in the pathway because the rate of histidine biosynthesis seems to be controlled primarily by regulation of HisG enzymatic activity. The polypeptide is ATP phosphoribosyltransferase (Geobacillus sp. (strain WCH70)).